A 338-amino-acid chain; its full sequence is Ketol-acid reductoisomerase (NADP(+)) (338 aa).

The KARI N-terminal Rossmann domain maps to 1–181 (MKVYYDKDCD…GGGRTGIIET (181 aa)). Residues 24–27 (YGSQ), Arg47, Ser50, Thr52, and 82–85 (DEFQ) each bind NADP(+). His107 is a catalytic residue. NADP(+) is bound at residue Gly133. The region spanning 182-327 (TFKDETETDL…EQLRSMMPWI (146 aa)) is the KARI C-terminal knotted domain. The Mg(2+) site is built by Asp190, Glu194, Glu226, and Glu230. Ser251 provides a ligand contact to substrate.

This sequence belongs to the ketol-acid reductoisomerase family. Mg(2+) serves as cofactor.

The enzyme catalyses (2R)-2,3-dihydroxy-3-methylbutanoate + NADP(+) = (2S)-2-acetolactate + NADPH + H(+). The catalysed reaction is (2R,3R)-2,3-dihydroxy-3-methylpentanoate + NADP(+) = (S)-2-ethyl-2-hydroxy-3-oxobutanoate + NADPH + H(+). The protein operates within amino-acid biosynthesis; L-isoleucine biosynthesis; L-isoleucine from 2-oxobutanoate: step 2/4. It participates in amino-acid biosynthesis; L-valine biosynthesis; L-valine from pyruvate: step 2/4. Its function is as follows. Involved in the biosynthesis of branched-chain amino acids (BCAA). Catalyzes an alkyl-migration followed by a ketol-acid reduction of (S)-2-acetolactate (S2AL) to yield (R)-2,3-dihydroxy-isovalerate. In the isomerase reaction, S2AL is rearranged via a Mg-dependent methyl migration to produce 3-hydroxy-3-methyl-2-ketobutyrate (HMKB). In the reductase reaction, this 2-ketoacid undergoes a metal-dependent reduction by NADPH to yield (R)-2,3-dihydroxy-isovalerate. This Pseudomonas fluorescens (strain SBW25) protein is Ketol-acid reductoisomerase (NADP(+)).